The primary structure comprises 240 residues: ATP-dependent dethiobiotin synthetase BioD (240 aa).

13–18 (EVGKTV) serves as a coordination point for ATP. Thr17 is a binding site for Mg(2+). Lys38 is an active-site residue. A substrate-binding site is contributed by Ser42. ATP-binding positions include Asp55, 116–119 (EGAG), 176–177 (ND), and 205–207 (PWL). Residues Asp55 and Glu116 each coordinate Mg(2+).

This sequence belongs to the dethiobiotin synthetase family. Homodimer. Mg(2+) is required as a cofactor.

The protein localises to the cytoplasm. The catalysed reaction is (7R,8S)-7,8-diammoniononanoate + CO2 + ATP = (4R,5S)-dethiobiotin + ADP + phosphate + 3 H(+). It functions in the pathway cofactor biosynthesis; biotin biosynthesis; biotin from 7,8-diaminononanoate: step 1/2. Catalyzes a mechanistically unusual reaction, the ATP-dependent insertion of CO2 between the N7 and N8 nitrogen atoms of 7,8-diaminopelargonic acid (DAPA, also called 7,8-diammoniononanoate) to form a ureido ring. The polypeptide is ATP-dependent dethiobiotin synthetase BioD (Pseudescherichia vulneris (Escherichia vulneris)).